The sequence spans 512 residues: Histidine ammonia-lyase (512 aa).

The 5-imidazolinone (Ala-Gly) cross-link spans A144–G146. The residue at position 145 (S145) is a 2,3-didehydroalanine (Ser).

This sequence belongs to the PAL/histidase family. In terms of processing, contains an active site 4-methylidene-imidazol-5-one (MIO), which is formed autocatalytically by cyclization and dehydration of residues Ala-Ser-Gly.

The protein localises to the cytoplasm. The catalysed reaction is L-histidine = trans-urocanate + NH4(+). The protein operates within amino-acid degradation; L-histidine degradation into L-glutamate; N-formimidoyl-L-glutamate from L-histidine: step 1/3. In Desulfotalea psychrophila (strain LSv54 / DSM 12343), this protein is Histidine ammonia-lyase.